The sequence spans 245 residues: tRNA1(Val) (adenine(37)-N6)-methyltransferase (245 aa).

The protein belongs to the methyltransferase superfamily. tRNA (adenine-N(6)-)-methyltransferase family.

The protein localises to the cytoplasm. The catalysed reaction is adenosine(37) in tRNA1(Val) + S-adenosyl-L-methionine = N(6)-methyladenosine(37) in tRNA1(Val) + S-adenosyl-L-homocysteine + H(+). In terms of biological role, specifically methylates the adenine in position 37 of tRNA(1)(Val) (anticodon cmo5UAC). The sequence is that of tRNA1(Val) (adenine(37)-N6)-methyltransferase from Escherichia coli O157:H7.